The sequence spans 142 residues: Hemoglobin subunit alpha-2 (142 aa).

Residues 2–142 (VLSPADKTNV…VSTVLTSKYR (141 aa)) form the Globin domain. O2 is bound at residue histidine 59. Residue histidine 88 coordinates heme b.

The protein belongs to the globin family. Heterotetramer of two alpha chains and two beta chains. As to expression, red blood cells.

Functionally, involved in oxygen transport from the lung to the various peripheral tissues. This is Hemoglobin subunit alpha-2 from Arctocephalus galapagoensis (Galapagoes fur seal).